Here is a 229-residue protein sequence, read N- to C-terminus: Heptaprenylglyceryl phosphate synthase (229 aa).

Position 12 (Lys-12) interacts with sn-glycerol 1-phosphate. Mg(2+) contacts are provided by Asp-14 and Ser-40. Sn-glycerol 1-phosphate-binding positions include 159–164 (YLEYSG), Gly-189, and 209–210 (GN).

The protein belongs to the GGGP/HepGP synthase family. Group I subfamily. As to quaternary structure, homodimer. Mg(2+) is required as a cofactor.

It carries out the reaction sn-glycerol 1-phosphate + all-trans-heptaprenyl diphosphate = 3-heptaprenyl-sn-glycero-1-phosphate + diphosphate. It functions in the pathway membrane lipid metabolism; glycerophospholipid metabolism. In terms of biological role, prenyltransferase that catalyzes in vivo the transfer of the heptaprenyl moiety of heptaprenyl pyrophosphate (HepPP; 35 carbon atoms) to the C3 hydroxyl of sn-glycerol-1-phosphate (G1P), producing heptaprenylglyceryl phosphate (HepGP). This reaction is an ether-bond-formation step in the biosynthesis of archaea-type G1P-based membrane lipids found in Bacillales. This chain is Heptaprenylglyceryl phosphate synthase, found in Bacillus cereus (strain ATCC 10987 / NRS 248).